Consider the following 124-residue polypeptide: Aspartate 1-decarboxylase (124 aa).

The active-site Schiff-base intermediate with substrate; via pyruvic acid is the S25. S25 is subject to Pyruvic acid (Ser). T57 lines the substrate pocket. Y58 serves as the catalytic Proton donor. G73–A75 lines the substrate pocket.

The protein belongs to the PanD family. Heterooctamer of four alpha and four beta subunits. It depends on pyruvate as a cofactor. Is synthesized initially as an inactive proenzyme, which is activated by self-cleavage at a specific serine bond to produce a beta-subunit with a hydroxyl group at its C-terminus and an alpha-subunit with a pyruvoyl group at its N-terminus.

Its subcellular location is the cytoplasm. It carries out the reaction L-aspartate + H(+) = beta-alanine + CO2. It participates in cofactor biosynthesis; (R)-pantothenate biosynthesis; beta-alanine from L-aspartate: step 1/1. Functionally, catalyzes the pyruvoyl-dependent decarboxylation of aspartate to produce beta-alanine. The sequence is that of Aspartate 1-decarboxylase from Clostridium botulinum (strain Alaska E43 / Type E3).